A 319-amino-acid polypeptide reads, in one-letter code: Cell surface A33 antigen (319 aa).

Positions 1–21 are cleaved as a signal peptide; sequence MLGKAGSVVWMLCAIWVAADA. The region spanning 22–134 is the Ig-like V-type domain; sequence LTVETTQDIL…QDVNAKSRVR (113 aa). At 22–235 the chain is on the extracellular side; that stretch reads LTVETTQDIL…VAPRPPSMNI (214 aa). 3 disulfide bridges follow: Cys43/Cys117, Cys146/Cys222, and Cys162/Cys211. Asn99, Asn112, Asn200, and Asn223 each carry an N-linked (GlcNAc...) asparagine glycan. Residues 140 to 227 enclose the Ig-like C2-type domain; sequence PPSKPDCSIQ…GIESCNITVA (88 aa). A helical membrane pass occupies residues 236–256; that stretch reads ALYAGIAGGVFVALIIIGVIV. At 257-319 the chain is on the cytoplasmic side; that stretch reads YCCCCREKDD…GRSTPDQPFQ (63 aa). 2 stretches are compositionally biased toward basic and acidic residues: residues 267 to 276 and 284 to 308; these read KDQDREDARP and PKKE…DRWS. The interval 267-319 is disordered; the sequence is KDQDREDARPNRAAYQVPKKEQKEISRGREDEDDHRHEDRWSSGRSTPDQPFQ. Over residues 309 to 319 the composition is skewed to polar residues; that stretch reads SGRSTPDQPFQ.

Post-translationally, palmitoylated.

The protein localises to the membrane. May play a role in cell-cell recognition and signaling. The sequence is that of Cell surface A33 antigen (Gpa33) from Mus musculus (Mouse).